The following is a 500-amino-acid chain: Ribose import ATP-binding protein RbsA (500 aa).

2 consecutive ABC transporter domains span residues 3–239 and 246–493; these read IEMK…VGRE and DRTP…TGGV. 35-42 contributes to the ATP binding site; it reads GENGAGKS.

It belongs to the ABC transporter superfamily. Ribose importer (TC 3.A.1.2.1) family. In terms of assembly, the complex is composed of an ATP-binding protein (RbsA), two transmembrane proteins (RbsC) and a solute-binding protein (RbsB).

It localises to the cell membrane. It carries out the reaction D-ribose(out) + ATP + H2O = D-ribose(in) + ADP + phosphate + H(+). Part of the ABC transporter complex RbsABC involved in ribose import. Responsible for energy coupling to the transport system. The sequence is that of Ribose import ATP-binding protein RbsA from Lacticaseibacillus paracasei (strain ATCC 334 / BCRC 17002 / CCUG 31169 / CIP 107868 / KCTC 3260 / NRRL B-441) (Lactobacillus paracasei).